The primary structure comprises 97 residues: High mobility group protein homolog NHP1 (97 aa).

Residues 1-24 form a disordered region; that stretch reads MAGASDRTGVRRPRKAKKDPNAPK. Residues 23–93 constitute a DNA-binding region (HMG box); it reads PKRALSSYMF…RYEREKAEYA (71 aa).

The protein localises to the nucleus. The protein is High mobility group protein homolog NHP1 of Babesia bovis.